The following is a 633-amino-acid chain: Chaperone protein HtpG (633 aa).

The segment at 1-344 is a; substrate-binding; it reads MSLQPQAETL…SNDLPLNISR (344 aa). The b stretch occupies residues 345-560; the sequence is ELLQSNEVIN…ENEMSGHLQR (216 aa). A c region spans residues 561–633; the sequence is LLIQTGQDFM…KGLNELLLDS (73 aa).

It belongs to the heat shock protein 90 family. Homodimer.

It localises to the cytoplasm. In terms of biological role, molecular chaperone. Has ATPase activity. The polypeptide is Chaperone protein HtpG (Coxiella burnetii (strain RSA 331 / Henzerling II)).